Consider the following 421-residue polypeptide: Serine hydroxymethyltransferase (421 aa).

Residues Leu121 and Gly125–Leu127 each bind (6S)-5,6,7,8-tetrahydrofolate. The residue at position 229 (Lys229) is an N6-(pyridoxal phosphate)lysine.

Belongs to the SHMT family. As to quaternary structure, homodimer. The cofactor is pyridoxal 5'-phosphate.

It localises to the cytoplasm. The catalysed reaction is (6R)-5,10-methylene-5,6,7,8-tetrahydrofolate + glycine + H2O = (6S)-5,6,7,8-tetrahydrofolate + L-serine. Its pathway is one-carbon metabolism; tetrahydrofolate interconversion. The protein operates within amino-acid biosynthesis; glycine biosynthesis; glycine from L-serine: step 1/1. Catalyzes the reversible interconversion of serine and glycine with tetrahydrofolate (THF) serving as the one-carbon carrier. This reaction serves as the major source of one-carbon groups required for the biosynthesis of purines, thymidylate, methionine, and other important biomolecules. Also exhibits THF-independent aldolase activity toward beta-hydroxyamino acids, producing glycine and aldehydes, via a retro-aldol mechanism. This Haemophilus influenzae (strain 86-028NP) protein is Serine hydroxymethyltransferase.